The following is a 268-amino-acid chain: Small ribosomal subunit protein eS1 (268 aa).

Residues 1-21 (MAVGKNKGLSKGGKKGGKKKV) form a disordered region.

Belongs to the eukaryotic ribosomal protein eS1 family. As to quaternary structure, component of the small ribosomal subunit. Mature ribosomes consist of a small (40S) and a large (60S) subunit. The 40S subunit contains about 33 different proteins and 1 molecule of RNA (18S). The 60S subunit contains about 49 different proteins and 3 molecules of RNA (28S, 5.8S and 5S).

It localises to the cytoplasm. In terms of biological role, essential for oogenesis; required for late follicle cell development. This chain is Small ribosomal subunit protein eS1, found in Drosophila erecta (Fruit fly).